Consider the following 101-residue polypeptide: Thrombin-like enzyme okinaxobin-1 (101 aa).

The N-terminal stretch at 1 to 16 (LIRVLANLLILQLSYA) is a signal peptide. A propeptide spanning residues 17–22 (QKSSEL) is cleaved from the precursor. The Peptidase S1 domain maps to 23–101 (VIGGDECNIN…PKKKYFFRCR (79 aa)). A disulfide bridge links cysteine 50 with cysteine 66. The Charge relay system role is filled by histidine 65.

Belongs to the peptidase S1 family. Snake venom subfamily. In terms of assembly, monomer. In terms of processing, glycosylated. In terms of tissue distribution, expressed by the venom gland.

It is found in the secreted. Strongly inactivated by diisopropylfluorophosphate (DFP) and phenylmethanesulfonyl fluoride (PMSF), and to a lesser extent by tosyl-L-lysine chloromethyl ketone (TLCK). In terms of biological role, thrombin-like snake venom serine protease that releases specifically fibrinopeptide B from fibrinogen (FGB) to form fibrin clots. Shows a preferential cleavage at Arg-|-Gly bonds in fibrinogen beta chains. Cleaves fibrinogen beta chains preferentially to alpha chains. The chain is Thrombin-like enzyme okinaxobin-1 from Ovophis okinavensis (Ryukyu Island pit viper).